We begin with the raw amino-acid sequence, 716 residues long: Fatty acid oxidation complex subunit alpha (716 aa).

The interval 1 to 188 is enoyl-CoA hydratase/isomerase; the sequence is MIYQSPTIQV…KVGAIDAVVA (188 aa). Asp295 provides a ligand contact to substrate. The segment at 310–716 is 3-hydroxyacyl-CoA dehydrogenase; the sequence is KDIKHAAVLG…SNNGSYYPKA (407 aa). NAD(+) contacts are provided by residues Met323, Asp342, 399 to 401, Lys406, and Ser428; that span reads VVE. His449 (for 3-hydroxyacyl-CoA dehydrogenase activity) is an active-site residue. Asn452 lines the NAD(+) pocket. 2 residues coordinate substrate: Asn499 and Tyr659.

The protein in the N-terminal section; belongs to the enoyl-CoA hydratase/isomerase family. It in the C-terminal section; belongs to the 3-hydroxyacyl-CoA dehydrogenase family. Heterotetramer of two alpha chains (FadB) and two beta chains (FadA).

It carries out the reaction a (3S)-3-hydroxyacyl-CoA + NAD(+) = a 3-oxoacyl-CoA + NADH + H(+). It catalyses the reaction a (3S)-3-hydroxyacyl-CoA = a (2E)-enoyl-CoA + H2O. The enzyme catalyses a 4-saturated-(3S)-3-hydroxyacyl-CoA = a (3E)-enoyl-CoA + H2O. The catalysed reaction is (3S)-3-hydroxybutanoyl-CoA = (3R)-3-hydroxybutanoyl-CoA. It carries out the reaction a (3Z)-enoyl-CoA = a 4-saturated (2E)-enoyl-CoA. It catalyses the reaction a (3E)-enoyl-CoA = a 4-saturated (2E)-enoyl-CoA. It functions in the pathway lipid metabolism; fatty acid beta-oxidation. Functionally, involved in the aerobic and anaerobic degradation of long-chain fatty acids via beta-oxidation cycle. Catalyzes the formation of 3-oxoacyl-CoA from enoyl-CoA via L-3-hydroxyacyl-CoA. It can also use D-3-hydroxyacyl-CoA and cis-3-enoyl-CoA as substrate. This Shewanella amazonensis (strain ATCC BAA-1098 / SB2B) protein is Fatty acid oxidation complex subunit alpha.